A 212-amino-acid polypeptide reads, in one-letter code: TATA-box-binding protein 2 (212 aa).

2 consecutive repeat copies span residues 30–114 (THPE…KKIG) and 120–201 (SNFN…YPIL).

It belongs to the TBP family. Belongs to the TFIID complex together with the TBP-associated factors (TAFs). Binds DNA as monomer.

The protein resides in the nucleus. In terms of biological role, general transcription factor that functions at the core of the DNA-binding multiprotein factor TFIID. Binding of TFIID to the TATA box is the initial transcriptional step of the pre-initiation complex (PIC), playing a role in the activation of eukaryotic genes transcribed by RNA polymerase II. The chain is TATA-box-binding protein 2 from Entamoeba histolytica (strain ATCC 30459 / HM-1:IMSS / ABRM).